The sequence spans 366 residues: MPMISVLGKMFLWQREGPGGRWTCQTSRRVSSDPAWAVEWIELPRGLSLSSLGSARTLRGWSRSSRPSSVDSQDLPEVNVGDTVAMLPKSRRALTIQEIAALARSSLHGISQVVKDHVTKPTAMAQGRVAHLIEWKGWSKPSDSPAALESAFSSYSDLSEGEQEARFAAGVAEQFAIAEAKLRAWSSVDGEDSTDDSYDEDFAGGMDTDMAGQLPLGPHLQDLFTGHRFSRPVRQGSVEPESDCSQTVSPDTLCSSLCSLEDGLLGSPARLASQLLGDELLLAKLPPSRESAFRSLGPLEAQDSLYNSPLTESCLSPAEEEPAPCKDCQPLCPPLTGSWERQRQASDLASSGVVSLDEDEAEPEEQ.

Positions 342 to 366 are disordered; it reads QRQASDLASSGVVSLDEDEAEPEEQ. The segment covering 356 to 366 has biased composition (acidic residues); the sequence is LDEDEAEPEEQ.

It belongs to the FAM131 family.

The sequence is that of Protein FAM131A (FAM131A) from Homo sapiens (Human).